A 193-amino-acid polypeptide reads, in one-letter code: MSRSANITRETKETKIEVLLDIDRKGEVKVSTPIPFFNHMLITLLTYMNSTAIVSATDKLPYDDHHIVEDVAITLGLAIKTALGDKRGIKRFSHQIIPMDDALVLVSLDISNRGMAFVNLNLKRSEIGGLATENVPHFFQSFAYNSGITLHISQLSGYNTHHIIEASFKALGLALYEATRIVDNEIRSTKGII.

This sequence belongs to the imidazoleglycerol-phosphate dehydratase family.

The protein localises to the cytoplasm. It catalyses the reaction D-erythro-1-(imidazol-4-yl)glycerol 3-phosphate = 3-(imidazol-4-yl)-2-oxopropyl phosphate + H2O. The protein operates within amino-acid biosynthesis; L-histidine biosynthesis; L-histidine from 5-phospho-alpha-D-ribose 1-diphosphate: step 6/9. The protein is Imidazoleglycerol-phosphate dehydratase (hisB) of Saccharolobus solfataricus (strain ATCC 35092 / DSM 1617 / JCM 11322 / P2) (Sulfolobus solfataricus).